The primary structure comprises 349 residues: Cytoplasmic tRNA 2-thiolation protein 2 (349 aa).

Belongs to the CTU2/NCS2 family.

It localises to the cytoplasm. It functions in the pathway tRNA modification; 5-methoxycarbonylmethyl-2-thiouridine-tRNA biosynthesis. Functionally, plays a central role in 2-thiolation of mcm(5)S(2)U at tRNA wobble positions of tRNA(Lys), tRNA(Glu) and tRNA(Gln). May act by forming a heterodimer with tut-1/ctu-1 that ligates sulfur from thiocarboxylated urm-1 onto the uridine of tRNAs at wobble position. The chain is Cytoplasmic tRNA 2-thiolation protein 2 from Caenorhabditis elegans.